The primary structure comprises 164 residues: Phosphopantetheine adenylyltransferase (164 aa).

Ser9 contacts substrate. ATP contacts are provided by residues Ser9–Phe10 and His17. Residues Lys41, Leu73, and Lys87 each contribute to the substrate site. ATP is bound by residues Gly88–Arg90, Glu98, and Tyr122–Ser128.

The protein belongs to the bacterial CoaD family. Homohexamer. The cofactor is Mg(2+).

It localises to the cytoplasm. The catalysed reaction is (R)-4'-phosphopantetheine + ATP + H(+) = 3'-dephospho-CoA + diphosphate. Its pathway is cofactor biosynthesis; coenzyme A biosynthesis; CoA from (R)-pantothenate: step 4/5. Functionally, reversibly transfers an adenylyl group from ATP to 4'-phosphopantetheine, yielding dephospho-CoA (dPCoA) and pyrophosphate. This is Phosphopantetheine adenylyltransferase from Rhodococcus jostii (strain RHA1).